Consider the following 94-residue polypeptide: DNA-directed RNA polymerase subunit omega (94 aa).

The protein belongs to the RNA polymerase subunit omega family. As to quaternary structure, the RNAP catalytic core consists of 2 alpha, 1 beta, 1 beta' and 1 omega subunit. When a sigma factor is associated with the core the holoenzyme is formed, which can initiate transcription.

It carries out the reaction RNA(n) + a ribonucleoside 5'-triphosphate = RNA(n+1) + diphosphate. Functionally, promotes RNA polymerase assembly. Latches the N- and C-terminal regions of the beta' subunit thereby facilitating its interaction with the beta and alpha subunits. This Shewanella pealeana (strain ATCC 700345 / ANG-SQ1) protein is DNA-directed RNA polymerase subunit omega.